The following is a 429-amino-acid chain: uncharacterized protein (429 aa).

Active-site charge relay system residues include Ser116, Asp179, and His206.

This sequence belongs to the AB hydrolase 3 family.

It localises to the cytoplasm. The protein localises to the nucleus. This is an uncharacterized protein from Schizosaccharomyces pombe (strain 972 / ATCC 24843) (Fission yeast).